We begin with the raw amino-acid sequence, 395 residues long: Probable FMNH2-dependent monooxygenase SfnC (395 aa).

In terms of biological role, involved in the dimethyl sulfide degradation pathway. This chain is Probable FMNH2-dependent monooxygenase SfnC, found in Pseudomonas putida (Arthrobacter siderocapsulatus).